Consider the following 243-residue polypeptide: Sugar fermentation stimulation protein homolog (243 aa).

This sequence belongs to the SfsA family.

The polypeptide is Sugar fermentation stimulation protein homolog (Bdellovibrio bacteriovorus (strain ATCC 15356 / DSM 50701 / NCIMB 9529 / HD100)).